A 97-amino-acid polypeptide reads, in one-letter code: MKIRPLHDRVIVKRKEAESKSAGGIVLTGSAAGKSTRGTVIAVGNGRILDNGNLKSLDVKVGDTVIFNEGYGAKVEKIDNEELLILTESDILAIVEE.

It belongs to the GroES chaperonin family. Heptamer of 7 subunits arranged in a ring. Interacts with the chaperonin GroEL.

The protein resides in the cytoplasm. Together with the chaperonin GroEL, plays an essential role in assisting protein folding. The GroEL-GroES system forms a nano-cage that allows encapsulation of the non-native substrate proteins and provides a physical environment optimized to promote and accelerate protein folding. GroES binds to the apical surface of the GroEL ring, thereby capping the opening of the GroEL channel. This is Co-chaperonin GroES from Buchnera aphidicola subsp. Baizongia pistaciae (strain Bp).